A 184-amino-acid chain; its full sequence is Photosystem I assembly protein Ycf4 (184 aa).

2 helical membrane passes run 22-42 (FCWAIILFLGSLGFLLIGISS) and 57-77 (IIFFPQGLVMSFYGLAGLFIS).

It belongs to the Ycf4 family.

It localises to the plastid. The protein localises to the chloroplast thylakoid membrane. Seems to be required for the assembly of the photosystem I complex. The polypeptide is Photosystem I assembly protein Ycf4 (Populus alba (White poplar)).